The sequence spans 134 residues: Probable RNA-binding protein MJ0652 (134 aa).

Positions Arg-11–Lys-108 constitute a CRM domain.

This is Probable RNA-binding protein MJ0652 from Methanocaldococcus jannaschii (strain ATCC 43067 / DSM 2661 / JAL-1 / JCM 10045 / NBRC 100440) (Methanococcus jannaschii).